A 338-amino-acid chain; its full sequence is Fructose-1,6-bisphosphatase class 1 (338 aa).

Mg(2+) is bound by residues glutamate 90, aspartate 112, leucine 114, and aspartate 115. Substrate-binding positions include 115 to 118 (DGSS), asparagine 207, and lysine 273. Mg(2+) is bound at residue glutamate 279.

The protein belongs to the FBPase class 1 family. In terms of assembly, homotetramer. It depends on Mg(2+) as a cofactor.

It localises to the cytoplasm. It catalyses the reaction beta-D-fructose 1,6-bisphosphate + H2O = beta-D-fructose 6-phosphate + phosphate. It participates in carbohydrate biosynthesis; gluconeogenesis. The polypeptide is Fructose-1,6-bisphosphatase class 1 (Xanthomonas campestris pv. campestris (strain 8004)).